The sequence spans 504 residues: MNSQNYSINNFKQIFDNDILSDVKLILKDNNKELSLNLHKIVLFTHCKFFQAMFVGFEESTKKEVVLNVQNVDICRDIIKEFYGFKSPSVTRYQNWKCRLEYHICCNYFLIDNKFPDIVNINKSCFDDLLNLIDKINYNDVTIRLLAKNLPSNYDLSKLPLELVKKMRNKSCYSGFVFFGNEKHLCIADENFDNIRKFQYGIDLGNDYCYMPNSNKIVRVVSNYVANFSLQSESFECYKIRTKKFNKKFDKKYKIKSSDSFEKPIYNSLRNEIIIIHRKKKYSIICVLDAKKFDLVRTICKFKKSKEKLCHMALSYDCNKLVFVLTIINEVNNKNTEIYVKYLDTGVQERIYKTNRIVNDLKFLNNDIIVFYNNKNNSGHLKTYDISKHKKLPGLTTFPITHISICQEKYVIIVTNMYTHIMVSKKFSGIKYFENCKVVCSPSGKIVSYGNSKNFLTSIDDYENYKTLDSLEINSILPVNVKYDIHDKLNDYIDSLKKIEEENI.

The 71-residue stretch at Ser21–Thr91 folds into the BTB domain.

The protein belongs to the mimivirus BTB/WD family.

The protein is Putative BTB/POZ domain-containing protein R842 of Acanthamoeba polyphaga (Amoeba).